The primary structure comprises 494 residues: Probable cytochrome P450 518A1 (494 aa).

Residues 1-21 (MSILIILIISIIFYLIFDFLY) form a helical membrane-spanning segment. Residue C438 coordinates heme.

It belongs to the cytochrome P450 family. Heme serves as cofactor.

Its subcellular location is the membrane. The polypeptide is Probable cytochrome P450 518A1 (cyp518A1) (Dictyostelium discoideum (Social amoeba)).